The chain runs to 92 residues: Large ribosomal subunit protein eL43 (92 aa).

Zn(2+) is bound by residues cysteine 39, cysteine 42, cysteine 57, and cysteine 60. The C4-type zinc finger occupies 39–60 (CSFCGKTKMKRKAVGIWHCGSC).

Belongs to the eukaryotic ribosomal protein eL43 family. As to quaternary structure, component of the large ribosomal subunit.

Its subcellular location is the cytoplasm. Functionally, component of the large ribosomal subunit. The ribosome is a large ribonucleoprotein complex responsible for the synthesis of proteins in the cell. This chain is Large ribosomal subunit protein eL43 (RPL37A), found in Gallus gallus (Chicken).